We begin with the raw amino-acid sequence, 390 residues long: Elongation factor Tu 2 (390 aa).

One can recognise a tr-type G domain in the interval 10–203; the sequence is KPHLNIGTMG…AVDTYVPMPE (194 aa). The segment at 19–26 is G1; the sequence is GHVDHGKT. Residue 19–26 coordinates GTP; it reads GHVDHGKT. Thr-26 provides a ligand contact to Mg(2+). The G2 stretch occupies residues 60–64; the sequence is GITIN. The tract at residues 81 to 84 is G3; it reads DMPG. GTP is bound by residues 81–85 and 136–139; these read DMPGH and NKAD. The G4 stretch occupies residues 136–139; sequence NKAD. Residues 173-175 are G5; the sequence is SGL.

This sequence belongs to the TRAFAC class translation factor GTPase superfamily. Classic translation factor GTPase family. EF-Tu/EF-1A subfamily. As to quaternary structure, monomer.

The protein resides in the cytoplasm. The catalysed reaction is GTP + H2O = GDP + phosphate + H(+). Functionally, GTP hydrolase that promotes the GTP-dependent binding of aminoacyl-tRNA to the A-site of ribosomes during protein biosynthesis. The protein is Elongation factor Tu 2 of Streptomyces avermitilis (strain ATCC 31267 / DSM 46492 / JCM 5070 / NBRC 14893 / NCIMB 12804 / NRRL 8165 / MA-4680).